Here is a 79-residue protein sequence, read N- to C-terminus: UPF0180 protein BCB4264_A1446 (79 aa).

Belongs to the UPF0180 family.

This chain is UPF0180 protein BCB4264_A1446, found in Bacillus cereus (strain B4264).